The primary structure comprises 109 residues: Cell division protein ZapA (109 aa).

Residues Pro21–Arg99 are a coiled coil.

It belongs to the ZapA family. Type 1 subfamily. In terms of assembly, homodimer. Interacts with FtsZ.

Its subcellular location is the cytoplasm. In terms of biological role, activator of cell division through the inhibition of FtsZ GTPase activity, therefore promoting FtsZ assembly into bundles of protofilaments necessary for the formation of the division Z ring. It is recruited early at mid-cell but it is not essential for cell division. This chain is Cell division protein ZapA, found in Edwardsiella ictaluri (strain 93-146).